A 521-amino-acid chain; its full sequence is Cytochrome P450 1A1 (521 aa).

F229 contributes to the substrate binding site. C463 is a binding site for heme.

This sequence belongs to the cytochrome P450 family. Heme is required as a cofactor.

It localises to the endoplasmic reticulum membrane. The protein localises to the microsome membrane. The catalysed reaction is an organic molecule + reduced [NADPH--hemoprotein reductase] + O2 = an alcohol + oxidized [NADPH--hemoprotein reductase] + H2O + H(+). In terms of biological role, cytochromes P450 are a group of heme-thiolate monooxygenases. They oxidize a variety of structurally unrelated compounds, including steroids, fatty acids, and xenobiotics. This chain is Cytochrome P450 1A1 (cyp1a1), found in Oryzias latipes (Japanese rice fish).